We begin with the raw amino-acid sequence, 168 residues long: uncharacterized protein (168 aa).

Helical transmembrane passes span 41–61 and 133–153; these read LLPW…LFFI and KFVI…FFVL.

The protein localises to the cell membrane. This is an uncharacterized protein from Thermotoga maritima (strain ATCC 43589 / DSM 3109 / JCM 10099 / NBRC 100826 / MSB8).